Reading from the N-terminus, the 45-residue chain is Stationary-phase-induced ribosome-associated protein (45 aa).

The disordered stretch occupies residues 21-45 (RKIVTEGDKSSVVNNPTGRKRPAEK).

This sequence belongs to the SRA family. In terms of assembly, associates exclusively with the 30S subunit; there is 0.1 copy per ribosome in the exponential phase and 0.4 copies per ribosome in the stationary phase.

Functionally, although this protein associates with the 30S subunit of the ribosome it is not considered to be a bona fide ribosomal protein. This Escherichia coli O157:H7 protein is Stationary-phase-induced ribosome-associated protein (sra).